The chain runs to 636 residues: Protein SOSEKI 2 (636 aa).

Residues 9–103 form a DIX-like oligomerization domain region; the sequence is HKIEVIYLLS…YVLKALEVMD (95 aa). Disordered stretches follow at residues 164 to 188, 281 to 304, 340 to 393, and 499 to 524; these read VHNN…SRVP, HGRL…TVDI, VEGS…TSAK, and LGSG…VSRP. Polar residues-rich tracts occupy residues 375–390 and 499–510; these read SSKS…TYET and LGSGQASESFSP.

The protein belongs to the SOSEKI family. As to quaternary structure, homodimer. Forms long polymer filaments with other SOKs proteins polymers crucial for polar localization and biological activity.

Its subcellular location is the cell membrane. SOSEKI proteins locally interpret global polarity cues and can influence cell division orientation to coordinate cell polarization relative to body axes. In Physcomitrium patens (Spreading-leaved earth moss), this protein is Protein SOSEKI 2.